The chain runs to 166 residues: Transcriptional repressor NrdR (166 aa).

A zinc finger lies at 3 to 34 (CPFCRNPDSRVVDSRMADDGSSIRRRRQCPEC). An ATP-cone domain is found at 46–136 (LSVIKRSGVG…VYQAFESLED (91 aa)).

The protein belongs to the NrdR family. Zn(2+) serves as cofactor.

In terms of biological role, negatively regulates transcription of bacterial ribonucleotide reductase nrd genes and operons by binding to NrdR-boxes. The sequence is that of Transcriptional repressor NrdR from Paenarthrobacter aurescens (strain TC1).